Consider the following 160-residue polypeptide: Nucleotide-binding protein Tgr7_1196 (160 aa).

This sequence belongs to the YajQ family.

Nucleotide-binding protein. The protein is Nucleotide-binding protein Tgr7_1196 of Thioalkalivibrio sulfidiphilus (strain HL-EbGR7).